Reading from the N-terminus, the 510-residue chain is Peptide transporter imqJ (510 aa).

Transmembrane regions (helical) follow at residues 1–21 (MVNQ…AVVA), 31–51 (IIFS…SSLP), and 57–77 (GISL…TGGI). A glycan (N-linked (GlcNAc...) asparagine) is linked at Asn80. A run of 4 helical transmembrane segments spans residues 116–136 (IFTT…LITI), 143–163 (FSAA…IVLV), 231–251 (IFIL…NFIS), and 269–289 (IDPI…FPFL). Residues 348–468 (PAASEIRLLY…RCSSVFFFKA (121 aa)) form the Fe2OG dioxygenase domain. Residues His377 and Asp379 each coordinate Fe cation. Asn421 carries an N-linked (GlcNAc...) asparagine glycan. His439 serves as a coordination point for Fe cation. Position 459 (Arg459) interacts with 2-oxoglutarate.

This sequence belongs to the major facilitator superfamily. Proton-dependent oligopeptide transporter (POT/PTR) (TC 2.A.17) family.

It localises to the membrane. Functionally, peptide transporter; part of the gene cluster that mediates the biosynthesis of imizoquins A to D, tripeptide-derived alkaloids that serve a protective role against oxidative stress that are essential for normal germination. The sequence is that of Peptide transporter imqJ from Aspergillus flavus (strain ATCC 200026 / FGSC A1120 / IAM 13836 / NRRL 3357 / JCM 12722 / SRRC 167).